Consider the following 336-residue polypeptide: Adenylosuccinate synthetase (336 aa).

GTP is bound by residues glycine 12 to lysine 18 and glycine 42 to serine 44. The active-site Proton acceptor is aspartate 13. Residues aspartate 13 and glycine 42 each contribute to the Mg(2+) site. Residues aspartate 13 to lysine 16, asparagine 40 to histidine 43, threonine 127, arginine 141, glutamine 179, threonine 194, and arginine 256 contribute to the IMP site. Catalysis depends on histidine 43, which acts as the Proton donor. Substrate is bound at residue threonine 252–arginine 258. Residues arginine 258, cysteine 284 to aspartate 286, and serine 324 to glycine 326 each bind GTP.

It belongs to the adenylosuccinate synthetase family. Homodimer. Mg(2+) is required as a cofactor.

It localises to the cytoplasm. The catalysed reaction is IMP + L-aspartate + GTP = N(6)-(1,2-dicarboxyethyl)-AMP + GDP + phosphate + 2 H(+). The protein operates within purine metabolism; AMP biosynthesis via de novo pathway; AMP from IMP: step 1/2. Functionally, plays an important role in the de novo pathway of purine nucleotide biosynthesis. Catalyzes the first committed step in the biosynthesis of AMP from IMP. The protein is Adenylosuccinate synthetase of Methanococcus aeolicus (strain ATCC BAA-1280 / DSM 17508 / OCM 812 / Nankai-3).